A 625-amino-acid polypeptide reads, in one-letter code: Probable potassium transport system protein Kup (625 aa).

The next 12 helical transmembrane spans lie at L10–L30, L50–V70, Y102–I122, L135–V155, F172–I192, G214–L234, F251–L271, L284–S304, I340–F360, A369–I389, L397–A417, and L422–T442.

The protein belongs to the HAK/KUP transporter (TC 2.A.72) family.

It is found in the cell inner membrane. The catalysed reaction is K(+)(in) + H(+)(in) = K(+)(out) + H(+)(out). In terms of biological role, transport of potassium into the cell. Likely operates as a K(+):H(+) symporter. This chain is Probable potassium transport system protein Kup, found in Herminiimonas arsenicoxydans.